A 131-amino-acid polypeptide reads, in one-letter code: Large-conductance mechanosensitive channel (131 aa).

The next 3 membrane-spanning stretches (helical) occupy residues 8-28 (FALKGNVLDLAVGVIIGGAFG), 30-50 (IVTSLVNDIIMPILGLVVGGI), and 72-92 (GQFIQTTFDFLIIAFSIFMFI).

This sequence belongs to the MscL family. In terms of assembly, homopentamer.

It is found in the cell membrane. In terms of biological role, channel that opens in response to stretch forces in the membrane lipid bilayer. May participate in the regulation of osmotic pressure changes within the cell. The polypeptide is Large-conductance mechanosensitive channel (Alkaliphilus oremlandii (strain OhILAs) (Clostridium oremlandii (strain OhILAs))).